Consider the following 209-residue polypeptide: Large ribosomal subunit protein uL3 (209 aa).

Positions 129–153 are disordered; that stretch reads SRGPMSHGSKFHRAPGSMGAASDPS.

Belongs to the universal ribosomal protein uL3 family. Part of the 50S ribosomal subunit. Forms a cluster with proteins L14 and L19.

Functionally, one of the primary rRNA binding proteins, it binds directly near the 3'-end of the 23S rRNA, where it nucleates assembly of the 50S subunit. This is Large ribosomal subunit protein uL3 from Clostridium perfringens (strain 13 / Type A).